A 558-amino-acid polypeptide reads, in one-letter code: Potassium-transporting ATPase potassium-binding subunit 1 (558 aa).

12 consecutive transmembrane segments (helical) span residues 1-21 (MEII…SGYL), 66-86 (FNGF…WLFL), 127-147 (MIVM…VCIA), 166-186 (IVRF…ILLM), 245-265 (IWSN…MLFL), 281-301 (ALIL…LTMW), 327-347 (FGAG…TGSV), 354-374 (LTPL…VFGG), 377-397 (VGLM…SLMV), 416-436 (IVLV…LAFM), 482-502 (ISTG…QLMI), and 531-551 (IVFI…LGPI).

Belongs to the KdpA family. As to quaternary structure, the system is composed of three essential subunits: KdpA, KdpB and KdpC.

The protein resides in the cell membrane. In terms of biological role, part of the high-affinity ATP-driven potassium transport (or Kdp) system, which catalyzes the hydrolysis of ATP coupled with the electrogenic transport of potassium into the cytoplasm. This subunit binds the extracellular potassium ions and delivers the ions to the membrane domain of KdpB through an intramembrane tunnel. The chain is Potassium-transporting ATPase potassium-binding subunit 1 from Staphylococcus aureus (strain MRSA252).